We begin with the raw amino-acid sequence, 279 residues long: Protease HtpX homolog (279 aa).

Helical transmembrane passes span 4-24 and 34-54; these read IFLF…VLAV and GSLL…SLLM. Residue H140 coordinates Zn(2+). E141 is an active-site residue. Residue H144 participates in Zn(2+) binding. Helical transmembrane passes span 155–175 and 189–209; these read LIQG…ANLI and FLVS…IVMW. A Zn(2+)-binding site is contributed by E215.

The protein belongs to the peptidase M48B family. Zn(2+) is required as a cofactor.

It localises to the cell inner membrane. This is Protease HtpX homolog from Neisseria meningitidis serogroup B (strain ATCC BAA-335 / MC58).